The following is a 245-amino-acid chain: DNA repair protein RecO (245 aa).

It belongs to the RecO family.

Its function is as follows. Involved in DNA repair and RecF pathway recombination. The protein is DNA repair protein RecO of Bartonella bacilliformis (strain ATCC 35685 / KC583 / Herrer 020/F12,63).